The following is a 668-amino-acid chain: Threonine--tRNA ligase (668 aa).

Residues 1–61 (MSDLKIALTH…ADGDQVEPVA (61 aa)) enclose the TGS domain. A catalytic region spans residues 265-564 (DHRKLGRDLD…LVEHYAGAFP (300 aa)). 3 residues coordinate Zn(2+): cysteine 358, histidine 409, and histidine 541.

It belongs to the class-II aminoacyl-tRNA synthetase family. Homodimer. It depends on Zn(2+) as a cofactor.

Its subcellular location is the cytoplasm. It catalyses the reaction tRNA(Thr) + L-threonine + ATP = L-threonyl-tRNA(Thr) + AMP + diphosphate + H(+). In terms of biological role, catalyzes the attachment of threonine to tRNA(Thr) in a two-step reaction: L-threonine is first activated by ATP to form Thr-AMP and then transferred to the acceptor end of tRNA(Thr). Also edits incorrectly charged L-seryl-tRNA(Thr). In Nocardioides sp. (strain ATCC BAA-499 / JS614), this protein is Threonine--tRNA ligase.